Reading from the N-terminus, the 301-residue chain is GTPase Era (301 aa).

Positions 7-175 (YCGFIAIVGR…AAIVRKHLPE (169 aa)) constitute an Era-type G domain. The interval 15–22 (GRPNVGKS) is G1. Residue 15–22 (GRPNVGKS) coordinates GTP. Positions 41–45 (QTTRH) are G2. The segment at 62 to 65 (DTPG) is G3. GTP contacts are provided by residues 62 to 66 (DTPGL) and 124 to 127 (NKVD). The G4 stretch occupies residues 124–127 (NKVD). The tract at residues 154–156 (ISA) is G5. A KH type-2 domain is found at 206 to 283 (LGAELPYSVT…HLELWVKVKS (78 aa)).

The protein belongs to the TRAFAC class TrmE-Era-EngA-EngB-Septin-like GTPase superfamily. Era GTPase family. Monomer.

The protein resides in the cytoplasm. It localises to the cell inner membrane. An essential GTPase that binds both GDP and GTP, with rapid nucleotide exchange. Plays a role in 16S rRNA processing and 30S ribosomal subunit biogenesis and possibly also in cell cycle regulation and energy metabolism. The polypeptide is GTPase Era (Escherichia coli O157:H7).